Reading from the N-terminus, the 478-residue chain is ATP synthase subunit beta (478 aa).

160–167 lines the ATP pocket; that stretch reads GGAGVGKT.

Belongs to the ATPase alpha/beta chains family. As to quaternary structure, F-type ATPases have 2 components, CF(1) - the catalytic core - and CF(0) - the membrane proton channel. CF(1) has five subunits: alpha(3), beta(3), gamma(1), delta(1), epsilon(1). CF(0) has three main subunits: a(1), b(2) and c(9-12). The alpha and beta chains form an alternating ring which encloses part of the gamma chain. CF(1) is attached to CF(0) by a central stalk formed by the gamma and epsilon chains, while a peripheral stalk is formed by the delta and b chains.

The protein localises to the cell inner membrane. The enzyme catalyses ATP + H2O + 4 H(+)(in) = ADP + phosphate + 5 H(+)(out). Functionally, produces ATP from ADP in the presence of a proton gradient across the membrane. The catalytic sites are hosted primarily by the beta subunits. The polypeptide is ATP synthase subunit beta (Orientia tsutsugamushi (strain Ikeda) (Rickettsia tsutsugamushi)).